Reading from the N-terminus, the 202-residue chain is Na(+)-translocating NADH-quinone reductase subunit E (202 aa).

Helical transmembrane passes span 11–31 (SVFI…FLAV), 35–55 (VTTA…SVPA), 79–99 (LSFL…QILE), 114–134 (GIFL…AFMV), 144–164 (LVFG…LAAV), and 180–200 (LGIT…FSGV).

Belongs to the NqrDE/RnfAE family. As to quaternary structure, composed of six subunits; NqrA, NqrB, NqrC, NqrD, NqrE and NqrF.

It is found in the cell inner membrane. The catalysed reaction is a ubiquinone + n Na(+)(in) + NADH + H(+) = a ubiquinol + n Na(+)(out) + NAD(+). Its function is as follows. NQR complex catalyzes the reduction of ubiquinone-1 to ubiquinol by two successive reactions, coupled with the transport of Na(+) ions from the cytoplasm to the periplasm. NqrA to NqrE are probably involved in the second step, the conversion of ubisemiquinone to ubiquinol. The polypeptide is Na(+)-translocating NADH-quinone reductase subunit E (Shewanella denitrificans (strain OS217 / ATCC BAA-1090 / DSM 15013)).